A 432-amino-acid chain; its full sequence is Neuronal pentraxin-1 (432 aa).

The signal sequence occupies residues 1 to 22 (MLAGRAARTCALLALCLLGSRA). The disordered stretch occupies residues 90-128 (ESQSTLDAGPGEARSGGGRKQPGSGKNTMGDLSRTPASE). Asn-154 and Asn-193 each carry an N-linked (GlcNAc...) asparagine glycan. Positions 226–428 (DKFQLTFPLR…GATKWTFEAC (203 aa)) constitute a Pentraxin (PTX) domain. Cysteines 256 and 316 form a disulfide. Residues Asn-280, Glu-358, Gln-359, Asp-360, and Gln-370 each contribute to the Ca(2+) site.

In terms of assembly, homooligomer or heterooligomer (probably pentamer) with neuronal pentraxin receptor (NPTXR). The cofactor is Ca(2+). Post-translationally, glycosylated. In terms of tissue distribution, cerebellum, hippocampus and cerebral cortex.

It localises to the secreted. The protein resides in the cytoplasmic vesicle. Its subcellular location is the secretory vesicle. The protein localises to the endoplasmic reticulum. Its function is as follows. May be involved in mediating uptake of synaptic material during synapse remodeling or in mediating the synaptic clustering of AMPA glutamate receptors at a subset of excitatory synapses. The chain is Neuronal pentraxin-1 (Nptx1) from Rattus norvegicus (Rat).